The primary structure comprises 169 residues: MAALLLRHVGRHCLRAHFSPQLCIRNAVPLGTTAKEEMERFWNKNIGSNRPLSPHITIYSWSLPMAMSICHRGTGIALSAGVSLFGMSALLLPGNFESYLELVKSLCLGPALIHTAKFALVFPLMYHTWNGIRHLMWDLGKGLKIPQLYQSGVVVLVLTVLSSMGLAAM.

The transit peptide at 1-29 (MAALLLRHVGRHCLRAHFSPQLCIRNAVP) directs the protein to the mitochondrion. Over 30 to 65 (LGTTAKEEMERFWNKNIGSNRPLSPHITIYSWSLPM) the chain is Mitochondrial matrix. Residues 66-90 (AMSICHRGTGIALSAGVSLFGMSAL) form a helical membrane-spanning segment. The Mitochondrial intermembrane portion of the chain corresponds to 91 to 110 (LLPGNFESYLELVKSLCLGP). The chain crosses the membrane as a helical span at residues 111-139 (ALIHTAKFALVFPLMYHTWNGIRHLMWDL). Position 127 (His127) interacts with heme b. The Mitochondrial matrix segment spans residues 140–146 (GKGLKIP). A helical membrane pass occupies residues 147–167 (QLYQSGVVVLVLTVLSSMGLA). Residues 168-169 (AM) lie on the Mitochondrial intermembrane side of the membrane.

Belongs to the cytochrome b560 family. In terms of assembly, component of complex II composed of four subunits: the flavoprotein (FP) SDHA, iron-sulfur protein (IP) SDHB, and a cytochrome b560 composed of SDHC and SDHD. Requires heme b as cofactor.

Its subcellular location is the mitochondrion inner membrane. It functions in the pathway carbohydrate metabolism; tricarboxylic acid cycle. In terms of biological role, membrane-anchoring subunit of succinate dehydrogenase (SDH) that is involved in complex II of the mitochondrial electron transport chain and is responsible for transferring electrons from succinate to ubiquinone (coenzyme Q). SDH also oxidizes malate to the non-canonical enol form of oxaloacetate, enol-oxaloacetate. Enol-oxaloacetate, which is a potent inhibitor of the succinate dehydrogenase activity, is further isomerized into keto-oxaloacetate. The sequence is that of Succinate dehydrogenase cytochrome b560 subunit, mitochondrial (SDHC) from Homo sapiens (Human).